The sequence spans 160 residues: Sodium/proline symporter (160 aa).

2 helical membrane-spanning segments follow: residues 6-26 (PMLV…FIAW) and 68-88 (IFIS…GAWI).

The protein belongs to the sodium:solute symporter (SSF) (TC 2.A.21) family.

It is found in the cell inner membrane. It catalyses the reaction L-proline(in) + Na(+)(in) = L-proline(out) + Na(+)(out). In terms of biological role, catalyzes the sodium-dependent uptake of extracellular L-proline. This is Sodium/proline symporter from Klebsiella oxytoca.